Reading from the N-terminus, the 100-residue chain is Large ribosomal subunit protein uL23 (100 aa).

This sequence belongs to the universal ribosomal protein uL23 family. In terms of assembly, part of the 50S ribosomal subunit. Contacts protein L29, and trigger factor when it is bound to the ribosome.

In terms of biological role, one of the early assembly proteins it binds 23S rRNA. One of the proteins that surrounds the polypeptide exit tunnel on the outside of the ribosome. Forms the main docking site for trigger factor binding to the ribosome. This is Large ribosomal subunit protein uL23 from Salmonella paratyphi A (strain ATCC 9150 / SARB42).